A 438-amino-acid chain; its full sequence is 23S rRNA (uracil(1939)-C(5))-methyltransferase RlmD (438 aa).

The TRAM domain occupies L11 to K69. Positions 82, 88, 91, and 169 each coordinate [4Fe-4S] cluster. The S-adenosyl-L-methionine site is built by Q272, F301, N306, E322, N349, and D370. C396 (nucleophile) is an active-site residue.

It belongs to the class I-like SAM-binding methyltransferase superfamily. RNA M5U methyltransferase family. RlmD subfamily.

The catalysed reaction is uridine(1939) in 23S rRNA + S-adenosyl-L-methionine = 5-methyluridine(1939) in 23S rRNA + S-adenosyl-L-homocysteine + H(+). Functionally, catalyzes the formation of 5-methyl-uridine at position 1939 (m5U1939) in 23S rRNA. The chain is 23S rRNA (uracil(1939)-C(5))-methyltransferase RlmD from Vibrio vulnificus (strain YJ016).